Reading from the N-terminus, the 343-residue chain is Trans-enoyl reductase ACTTS2 (343 aa).

42 to 45 (GDWK) lines the NADP(+) pocket. Substrate is bound at residue 128 to 135 (VGITTVGQ). NADP(+)-binding positions include 162-165 (STAT), 185-188 (SPHN), and Tyr203. A substrate-binding site is contributed by 268–272 (GYTAL). NADP(+) is bound at residue 333-334 (VS).

Belongs to the zinc-containing alcohol dehydrogenase family. In terms of assembly, monomer.

It functions in the pathway mycotoxin biosynthesis. Trans-enoyl reductase; part of the gene clusters that mediate the biosynthesis of the host-selective toxins (HSTs) ACT-toxins responsible for brown spot of tangerine disease by the tangerine pathotype which affects tangerines and mandarins. ACT-toxins consist of three moieties, 9,10-epoxy-8-hydroxy-9-methyl-decatrienoic acid (EDA), valine and a polyketide. ACT-toxin I is toxic to both citrus and pear; toxin II the 5''-deoxy derivative of ACT-toxin I, is highly toxic to pear and slightly toxic to citrus. On cellular level, ACT-toxins affect plasma membrane of susceptible cells and cause a sudden increase in loss of K(+) after a few minutes of toxin treatment. The acyl-CoA ligase ACTT1, the hydrolase ACTT2, the enoyl-CoA hydratases ACTT3 and ACTT6, and the acyl-CoA synthetase ACTT5 are all involved in the biosynthesis of the AK-, AF- and ACT-toxin common 9,10-epoxy-8-hydroxy-9-methyl-decatrienoic acid (EDA) structural moiety. The exact role of each enzyme, and of additional enzymes identified within the AF-toxin clusters have still to be determined. On the other hand, ACTTS1 to ACTTS4 are specific to the tangerine pathotype. The function of ACTTS3 is to elongate the polyketide chain portion of ACT-toxin that is unique to this toxin. The enoyl-reductase ACTTS2 might complement the missing enoyl-reductase (ER) domain in ACTTS3 in the synthesis of the polyketide portion of ACT-toxin. The roles of the nonribosomal peptide synthetases-related proteins ACTTS1 and ACTTS4 have also still not been elucidated. In Alternaria alternata (Alternaria rot fungus), this protein is Trans-enoyl reductase ACTTS2.